The sequence spans 364 residues: Ribosomal RNA large subunit methyltransferase F (364 aa).

The segment at 1 to 30 (MTNKRKSAKPLEPAKRAPKPRTKKSRDLSA) is disordered.

This sequence belongs to the methyltransferase superfamily. METTL16/RlmF family.

The protein localises to the cytoplasm. The catalysed reaction is adenosine(1618) in 23S rRNA + S-adenosyl-L-methionine = N(6)-methyladenosine(1618) in 23S rRNA + S-adenosyl-L-homocysteine + H(+). In terms of biological role, specifically methylates the adenine in position 1618 of 23S rRNA. This chain is Ribosomal RNA large subunit methyltransferase F, found in Vibrio vulnificus (strain CMCP6).